Consider the following 457-residue polypeptide: F-box only protein 13 (457 aa).

An F-box domain is found at 64 to 110; it reads EFPMDDLNDDVLERVLSWLPTSCFFRMSSVCKRWKSSQTSKSFKLAC.

This chain is F-box only protein 13 (FBX13), found in Arabidopsis thaliana (Mouse-ear cress).